A 542-amino-acid polypeptide reads, in one-letter code: Membrane protein insertase YidC (542 aa).

The next 6 helical transmembrane spans lie at 6–26 (NILL…WQTD), 326–346 (LVVD…LLMF), 350–370 (FVGN…GGLY), 421–441 (GGCL…WVLL), 458–478 (LSVQ…MFLM), and 501–521 (VIFT…WLVG).

The protein belongs to the OXA1/ALB3/YidC family. Type 1 subfamily. In terms of assembly, interacts with the Sec translocase complex via SecD. Specifically interacts with transmembrane segments of nascent integral membrane proteins during membrane integration.

The protein resides in the cell inner membrane. Required for the insertion and/or proper folding and/or complex formation of integral membrane proteins into the membrane. Involved in integration of membrane proteins that insert both dependently and independently of the Sec translocase complex, as well as at least some lipoproteins. Aids folding of multispanning membrane proteins. The polypeptide is Membrane protein insertase YidC (Shewanella frigidimarina (strain NCIMB 400)).